A 354-amino-acid polypeptide reads, in one-letter code: Quinone-reactive Ni/Fe-hydrogenase small chain (354 aa).

Positions 1–36 (MLEEKGIERRDFMKWAGAMTAMLSLPATFTPLTAKA) form a signal peptide, tat-type signal. 8 residues coordinate [4Fe-4S] cluster: cysteine 53, cysteine 56, cysteine 153, cysteine 186, histidine 224, cysteine 227, cysteine 252, and cysteine 258. 3 residues coordinate [3Fe-4S] cluster: cysteine 267, cysteine 286, and cysteine 289.

Belongs to the [NiFe]/[NiFeSe] hydrogenase small subunit family. As to quaternary structure, heterodimer of a large and a small subunit. [4Fe-4S] cluster is required as a cofactor. It depends on [3Fe-4S] cluster as a cofactor. Predicted to be exported by the Tat system. The position of the signal peptide cleavage has been experimentally proven.

The protein localises to the cell membrane. The catalysed reaction is H2 + a menaquinone = a menaquinol. This chain is Quinone-reactive Ni/Fe-hydrogenase small chain (hydA), found in Wolinella succinogenes (strain ATCC 29543 / DSM 1740 / CCUG 13145 / JCM 31913 / LMG 7466 / NCTC 11488 / FDC 602W) (Vibrio succinogenes).